Consider the following 565-residue polypeptide: Sulfite reductase [NADPH] hemoprotein beta-component (565 aa).

Residues C429, C435, C474, and C478 each coordinate [4Fe-4S] cluster. A siroheme-binding site is contributed by C478.

Belongs to the nitrite and sulfite reductase 4Fe-4S domain family. Alpha(8)-beta(8). The alpha component is a flavoprotein, the beta component is a hemoprotein. Requires siroheme as cofactor. It depends on [4Fe-4S] cluster as a cofactor.

It carries out the reaction hydrogen sulfide + 3 NADP(+) + 3 H2O = sulfite + 3 NADPH + 4 H(+). It functions in the pathway sulfur metabolism; hydrogen sulfide biosynthesis; hydrogen sulfide from sulfite (NADPH route): step 1/1. In terms of biological role, component of the sulfite reductase complex that catalyzes the 6-electron reduction of sulfite to sulfide. This is one of several activities required for the biosynthesis of L-cysteine from sulfate. The sequence is that of Sulfite reductase [NADPH] hemoprotein beta-component from Shewanella sp. (strain MR-7).